Here is a 67-residue protein sequence, read N- to C-terminus: Conotoxin TsMMSK-011 (67 aa).

An N-terminal signal peptide occupies residues 1 to 22 (MMSKLGVLLTICLLLFPLTVLP). A propeptide spanning residues 23 to 50 (MDGDQPADLPALRTQDIATDQSPWFDPV) is cleaved from the precursor. 3 disulfide bridges follow: Cys53–Cys65, Cys54–Cys61, and Cys58–Cys64. At Pro63 the chain carries 4-hydroxyproline.

The protein belongs to the conotoxin M superfamily. In terms of tissue distribution, expressed by the venom duct.

It is found in the secreted. The sequence is that of Conotoxin TsMMSK-011 from Conus tessulatus (Tessellate cone).